Here is a 327-residue protein sequence, read N- to C-terminus: Delta-aminolevulinic acid dehydratase (327 aa).

Positions 119, 121, and 129 each coordinate Zn(2+). Lys-198 serves as the catalytic Schiff-base intermediate with substrate. Arg-208 and Arg-220 together coordinate 5-aminolevulinate. Residue Glu-236 coordinates Mg(2+). The active-site Schiff-base intermediate with substrate is Lys-251. 5-aminolevulinate-binding residues include Ser-277 and Tyr-316.

It belongs to the ALAD family. As to quaternary structure, homooctamer. Zn(2+) serves as cofactor.

It carries out the reaction 2 5-aminolevulinate = porphobilinogen + 2 H2O + H(+). It participates in porphyrin-containing compound metabolism; protoporphyrin-IX biosynthesis; coproporphyrinogen-III from 5-aminolevulinate: step 1/4. Catalyzes an early step in the biosynthesis of tetrapyrroles. Binds two molecules of 5-aminolevulinate per subunit, each at a distinct site, and catalyzes their condensation to form porphobilinogen. The sequence is that of Delta-aminolevulinic acid dehydratase (hemB) from Synechocystis sp. (strain ATCC 27184 / PCC 6803 / Kazusa).